The primary structure comprises 450 residues: MNLSYTPATICAVATAPGRGGVGVIRVSGKDLLPFAQAISGGKTPKPRYATYTDFFDAHGQALDNGLLLFFPGPNSFTGEDVIELQGHGGPVVLKMLLARCVELGARLAEPGEFTKRAFLNDKLDLAQAESVADLIDASSETAARSALKSLKGAFSREVHGLVDELINLRMLVEATLDFPEEEIDFLKQADAIGRLRRLRAQLVGVQATAKQGAILREGMHVVLVGQPNVGKSSLMNALAGDDIAIVTDIAGTTRDTVREEIVIDGVPVHIIDTAGLRDTDDVVEKIGIERTWQAVERADLALLLVDSREGLTAEVQSILERLPPALPRVQVFNKVDLSGEAAGLAEQDGHPLVRLSARTHDGVDILKAKLLEMIGYSGADEGVFLARQRHLDAIARAADHLELAEADWEQVEIFAEELRMAQNALSEITGEFSADDLLGVIFSRFCIGK.

(6S)-5-formyl-5,6,7,8-tetrahydrofolate is bound by residues arginine 26, glutamate 84, and lysine 123. In terms of domain architecture, TrmE-type G spans 219–376; it reads GMHVVLVGQP…LKAKLLEMIG (158 aa). Asparagine 229 is a binding site for K(+). GTP contacts are provided by residues 229 to 234, 248 to 254, 273 to 276, and 357 to 359; these read NVGKSS, TDIAGTT, DTAG, and SAR. A Mg(2+)-binding site is contributed by serine 233. K(+) contacts are provided by threonine 248, isoleucine 250, and threonine 253. Threonine 254 is a Mg(2+) binding site. A (6S)-5-formyl-5,6,7,8-tetrahydrofolate-binding site is contributed by lysine 450.

This sequence belongs to the TRAFAC class TrmE-Era-EngA-EngB-Septin-like GTPase superfamily. TrmE GTPase family. Homodimer. Heterotetramer of two MnmE and two MnmG subunits. The cofactor is K(+).

The protein resides in the cytoplasm. Its function is as follows. Exhibits a very high intrinsic GTPase hydrolysis rate. Involved in the addition of a carboxymethylaminomethyl (cmnm) group at the wobble position (U34) of certain tRNAs, forming tRNA-cmnm(5)s(2)U34. This is tRNA modification GTPase MnmE from Chromobacterium violaceum (strain ATCC 12472 / DSM 30191 / JCM 1249 / CCUG 213 / NBRC 12614 / NCIMB 9131 / NCTC 9757 / MK).